A 363-amino-acid polypeptide reads, in one-letter code: Peptide chain release factor 1 (363 aa).

The residue at position 237 (Gln237) is an N5-methylglutamine. A compositionally biased stretch (basic and acidic residues) spans 284–296 (EDEKRRSAEESTR). Positions 284 to 306 (EDEKRRSAEESTRRSLVASGDRS) are disordered.

It belongs to the prokaryotic/mitochondrial release factor family. Methylated by PrmC. Methylation increases the termination efficiency of RF1.

The protein resides in the cytoplasm. Functionally, peptide chain release factor 1 directs the termination of translation in response to the peptide chain termination codons UAG and UAA. This is Peptide chain release factor 1 from Shewanella oneidensis (strain ATCC 700550 / JCM 31522 / CIP 106686 / LMG 19005 / NCIMB 14063 / MR-1).